The primary structure comprises 407 residues: Monooxygenase 2 (407 aa).

The protein belongs to the 3-hydroxybenzoate 6-hydroxylase family. In terms of assembly, monomer. Requires FAD as cofactor. In terms of tissue distribution, expressed in seeds, seedlings, roots, leaves, flowers, pollen and siliques.

The chain is Monooxygenase 2 from Arabidopsis thaliana (Mouse-ear cress).